A 524-amino-acid chain; its full sequence is Cytochrome P450 monooxygenase alt1 (524 aa).

Residues 24–44 form a helical membrane-spanning segment; it reads IANMLSVIAFSICISPIVYFL. Cys469 contributes to the heme binding site.

Belongs to the cytochrome P450 family. Requires heme as cofactor.

The protein localises to the membrane. Its pathway is secondary metabolite biosynthesis. In terms of biological role, cytochrome P450 monooxygenase; part of the gene cluster that mediates the biosynthesis of alternapyrone derivatives. Alternapyrone is a decaketide with octa-methylation from methionine on every C2 unit except the third unit. All the domains in the polyketide synthase alt5 are apparently involved in alternapyrone synthesis, that is, the 8 CMeT, 7 KR, 7 DH, and 4 ER reactions in the 9 KS-mediated condensation steps required for alternapyrone synthesis. the alternapyrone produced by alt5 might be intensively modified by cytochrome P450 monooxygenases alt1, alt2 and alt3 and FAD-dependent oxidoreductase alt4 present in the alt gene cluster. The protein is Cytochrome P450 monooxygenase alt1 of Alternaria solani.